Consider the following 429-residue polypeptide: Nicotinate phosphoribosyltransferase (429 aa).

The nicotinate site is built by Y15, F177, and T229. The residue at position 232 (H232) is a Phosphohistidine; by autocatalysis. R294 provides a ligand contact to nicotinate. T355 provides a ligand contact to 5-phospho-alpha-D-ribose 1-diphosphate.

It belongs to the NAPRTase family. Post-translationally, transiently phosphorylated on a His residue during the reaction cycle. Phosphorylation strongly increases the affinity for substrates and increases the rate of nicotinate D-ribonucleotide production. Dephosphorylation regenerates the low-affinity form of the enzyme, leading to product release.

The protein resides in the cytoplasm. The protein localises to the nucleus. It catalyses the reaction nicotinate + 5-phospho-alpha-D-ribose 1-diphosphate + ATP + H2O = nicotinate beta-D-ribonucleotide + ADP + phosphate + diphosphate. The protein operates within cofactor biosynthesis; NAD(+) biosynthesis; nicotinate D-ribonucleotide from nicotinate: step 1/1. Functionally, catalyzes the first step in the biosynthesis of NAD from nicotinic acid, the ATP-dependent synthesis of beta-nicotinate D-ribonucleotide from nicotinate and 5-phospho-D-ribose 1-phosphate. Essential for growth under anaerobic conditions. The sequence is that of Nicotinate phosphoribosyltransferase (NPT1) from Saccharomyces cerevisiae (strain ATCC 204508 / S288c) (Baker's yeast).